The chain runs to 92 residues: Acylphosphatase (92 aa).

Positions 5-92 constitute an Acylphosphatase-like domain; it reads GVTIYVYGRV…EDIADFIVRH (88 aa). Residues Arg-20 and Asn-38 contribute to the active site.

The protein belongs to the acylphosphatase family.

It carries out the reaction an acyl phosphate + H2O = a carboxylate + phosphate + H(+). This is Acylphosphatase (acyP) from Photorhabdus laumondii subsp. laumondii (strain DSM 15139 / CIP 105565 / TT01) (Photorhabdus luminescens subsp. laumondii).